Reading from the N-terminus, the 199-residue chain is ATP-dependent Clp protease proteolytic subunit (199 aa).

The active-site Nucleophile is the Ser-97. The active site involves His-122.

Belongs to the peptidase S14 family. As to quaternary structure, fourteen ClpP subunits assemble into 2 heptameric rings which stack back to back to give a disk-like structure with a central cavity, resembling the structure of eukaryotic proteasomes.

The protein resides in the cytoplasm. It carries out the reaction Hydrolysis of proteins to small peptides in the presence of ATP and magnesium. alpha-casein is the usual test substrate. In the absence of ATP, only oligopeptides shorter than five residues are hydrolyzed (such as succinyl-Leu-Tyr-|-NHMec, and Leu-Tyr-Leu-|-Tyr-Trp, in which cleavage of the -Tyr-|-Leu- and -Tyr-|-Trp bonds also occurs).. In terms of biological role, cleaves peptides in various proteins in a process that requires ATP hydrolysis. Has a chymotrypsin-like activity. Plays a major role in the degradation of misfolded proteins. The polypeptide is ATP-dependent Clp protease proteolytic subunit (Citrifermentans bemidjiense (strain ATCC BAA-1014 / DSM 16622 / JCM 12645 / Bem) (Geobacter bemidjiensis)).